The primary structure comprises 395 residues: Dihydroorotate dehydrogenase (quinone), mitochondrial (395 aa).

A mitochondrion; not cleaved-targeting transit peptide spans 1-10; that stretch reads MAWRQLRKRA. At 1 to 10 the chain is on the mitochondrial matrix side; sequence MAWRQLRKRA. Residues 11 to 30 traverse the membrane as a helical segment; it reads LDAAIILGGGGLLFTSYLTA. The Mitochondrial intermembrane portion of the chain corresponds to 31–395; the sequence is TGDDHFYAEY…TDAIGVDHRR (365 aa). FMN is bound by residues 95 to 99 and Ser119; that span reads AGFDK. Lys99 is a binding site for substrate. Substrate is bound at residue 144–148; it reads NRYGF. Residues Asn180 and Asn211 each coordinate FMN. 211-216 serves as a coordination point for substrate; it reads NVSSPN. Residue Ser214 is the Nucleophile of the active site. Positions 254 and 282 each coordinate FMN. 283 to 284 is a substrate binding site; that stretch reads NT. Residues Gly305, Gly334, and 355–356 contribute to the FMN site; that span reads YT.

It belongs to the dihydroorotate dehydrogenase family. Type 2 subfamily. Monomer. Requires FMN as cofactor. The uncleaved transit peptide is required for mitochondrial targeting and proper membrane integration.

The protein localises to the mitochondrion inner membrane. It catalyses the reaction (S)-dihydroorotate + a quinone = orotate + a quinol. The protein operates within pyrimidine metabolism; UMP biosynthesis via de novo pathway; orotate from (S)-dihydroorotate (quinone route): step 1/1. In terms of biological role, catalyzes the conversion of dihydroorotate to orotate with quinone as electron acceptor. Required for UMP biosynthesis via de novo pathway. The sequence is that of Dihydroorotate dehydrogenase (quinone), mitochondrial (Dhodh) from Mus musculus (Mouse).